A 325-amino-acid chain; its full sequence is tRNA dimethylallyltransferase (325 aa).

Position 12-19 (12-19 (GPTASGKT)) interacts with ATP. 14-19 (TASGKT) contacts substrate. Interaction with substrate tRNA regions lie at residues 37-40 (DSAL), 161-165 (QRIHR), and 244-249 (RCVGYR).

The protein belongs to the IPP transferase family. As to quaternary structure, monomer. The cofactor is Mg(2+).

It carries out the reaction adenosine(37) in tRNA + dimethylallyl diphosphate = N(6)-dimethylallyladenosine(37) in tRNA + diphosphate. In terms of biological role, catalyzes the transfer of a dimethylallyl group onto the adenine at position 37 in tRNAs that read codons beginning with uridine, leading to the formation of N6-(dimethylallyl)adenosine (i(6)A). This is tRNA dimethylallyltransferase from Chromobacterium violaceum (strain ATCC 12472 / DSM 30191 / JCM 1249 / CCUG 213 / NBRC 12614 / NCIMB 9131 / NCTC 9757 / MK).